Consider the following 188-residue polypeptide: NADH-quinone oxidoreductase subunit I 2 (188 aa).

4Fe-4S ferredoxin-type domains follow at residues 56–88 (HFLK…VVPY) and 98–127 (AKFE…LGQQ). 8 residues coordinate [4Fe-4S] cluster: cysteine 68, cysteine 71, cysteine 74, cysteine 78, cysteine 107, cysteine 110, cysteine 113, and cysteine 117.

This sequence belongs to the complex I 23 kDa subunit family. In terms of assembly, NDH-1 is composed of 14 different subunits. Subunits NuoA, H, J, K, L, M, N constitute the membrane sector of the complex. It depends on [4Fe-4S] cluster as a cofactor.

It is found in the cell inner membrane. The catalysed reaction is a quinone + NADH + 5 H(+)(in) = a quinol + NAD(+) + 4 H(+)(out). Its function is as follows. NDH-1 shuttles electrons from NADH, via FMN and iron-sulfur (Fe-S) centers, to quinones in the respiratory chain. The immediate electron acceptor for the enzyme in this species is believed to be ubiquinone. Couples the redox reaction to proton translocation (for every two electrons transferred, four hydrogen ions are translocated across the cytoplasmic membrane), and thus conserves the redox energy in a proton gradient. This chain is NADH-quinone oxidoreductase subunit I 2, found in Rhizobium meliloti (strain 1021) (Ensifer meliloti).